The chain runs to 930 residues: uncharacterized protein (930 aa).

The Nuclear localization signal signature appears at 434-441; that stretch reads IRRGISRK.

The protein resides in the nucleus. This is an uncharacterized protein from Chaetomium thermophilum (strain DSM 1495 / CBS 144.50 / IMI 039719) (Thermochaetoides thermophila).